The sequence spans 99 residues: Integration host factor subunit alpha (99 aa).

The tract at residues 49–73 (FGNFDLRDKNQRPGRNPKTGEDIPI) is disordered.

This sequence belongs to the bacterial histone-like protein family. As to quaternary structure, heterodimer of an alpha and a beta chain.

Functionally, this protein is one of the two subunits of integration host factor, a specific DNA-binding protein that functions in genetic recombination as well as in transcriptional and translational control. This Shigella boydii serotype 18 (strain CDC 3083-94 / BS512) protein is Integration host factor subunit alpha.